We begin with the raw amino-acid sequence, 246 residues long: Flagellar brake protein YcgR (246 aa).

The 105-residue stretch at 128–232 (KRAHFRAYVG…QAERQLLQAI (105 aa)) folds into the PilZ domain.

Belongs to the YcgR family. As to quaternary structure, monomer. Interacts with the flagellar basal bodies.

It is found in the bacterial flagellum basal body. Functionally, acts as a flagellar brake, regulating swimming and swarming in a bis-(3'-5') cyclic diguanylic acid (c-di-GMP)-dependent manner. Binds 1 c-di-GMP dimer per subunit. Increasing levels of c-di-GMP lead to decreased motility. The protein is Flagellar brake protein YcgR of Thioalkalivibrio sulfidiphilus (strain HL-EbGR7).